An 87-amino-acid chain; its full sequence is Putative membrane protein insertion efficiency factor (87 aa).

Belongs to the UPF0161 family.

It localises to the cell membrane. Functionally, could be involved in insertion of integral membrane proteins into the membrane. The sequence is that of Putative membrane protein insertion efficiency factor from Ligilactobacillus salivarius (strain UCC118) (Lactobacillus salivarius).